Here is a 594-residue protein sequence, read N- to C-terminus: MAPAASACAGAPGSHPATTIFVCLFLIIYCPDRASAIQVTVPDPYHVVILFQPVTLHCTYQMSNTLTAPIVIWKYKSFCRDRVADAFSPASVDNQLNAQLAAGNPGYNPYVECQDSVRTVRVVATKQGNAVTLGDYYQGRRITITGNADLTFEQTAWGDSGVYYCSVVSAQDLDGNNEAYAELIVLGRTSEAPELLPGFRAGPLEDWLFVVVVCLASLLFFLLLGICWCQCCPHTCCCYVRCPCCPDKCCCPEALYAAGKAATSGVPSIYAPSIYTHLSPAKTPPPPPAMIPMRPPYGYPGDFDRTSSVGGHSSQVPLLREVDGSVSSEVRSGYRIQANQQDDSMRVLYYMEKELANFDPSRPGPPNGRVERAMSEVTSLHEDDWRSRPSRAPALTPIRDEEWNRHSPRSPRTWEQEPLQEQPRGGWGSGRPRARSVDALDDINRPGSTESGRSSPPSSGRRGRAYAPPRSRSRDDLYDPDDPRDLPHSRDPHYYDDLRSRDPRADPRSRQRSHDPRDAGFRSRDPQYDGRLLEEALKKKGAGERRRVYREEEEEEEEGHYPPAPPPYSETDSQASRERRMKKNLALSRESLVV.

The signal sequence occupies residues 1 to 35 (MAPAASACAGAPGSHPATTIFVCLFLIIYCPDRAS). The Extracellular segment spans residues 36-206 (AIQVTVPDPY…PGFRAGPLED (171 aa)). Residues 89 to 181 (PASVDNQLNA…DLDGNNEAYA (93 aa)) form the Ig-like V-type domain. An intrachain disulfide couples Cys-113 to Cys-165. The chain crosses the membrane as a helical span at residues 207-227 (WLFVVVVCLASLLFFLLLGIC). The Cytoplasmic segment spans residues 228–594 (WCQCCPHTCC…LALSRESLVV (367 aa)). The residue at position 283 (Thr-283) is a Phosphothreonine. Ser-308 is modified (phosphoserine; by MAPK8 and MAPK9). Phosphoserine is present on residues Ser-314, Ser-332, Ser-375, and Ser-379. Positions 375 to 387 (SEVTSLHEDDWRS) are enriched in basic and acidic residues. Residues 375–594 (SEVTSLHEDD…LALSRESLVV (220 aa)) form a disordered region. Thr-396 is modified (phosphothreonine). Phosphoserine is present on residues Ser-407, Ser-410, and Ser-436. Positions 435–444 (RSVDALDDIN) are enriched in basic and acidic residues. Positions 445–460 (RPGSTESGRSSPPSSG) are enriched in low complexity. Phosphoserine occurs at positions 471 and 473. Residues 472–550 (RSRDDLYDPD…GAGERRRVYR (79 aa)) show a composition bias toward basic and acidic residues. A Phosphotyrosine modification is found at Tyr-478. Ser-576 carries the phosphoserine modification. Lys-583 participates in a covalent cross-link: Glycyl lysine isopeptide (Lys-Gly) (interchain with G-Cter in ubiquitin). Residues Ser-588 and Ser-591 each carry the phosphoserine modification.

Belongs to the immunoglobulin superfamily. LISCH7 family. In terms of assembly, homotrimer or homotetramer. Assembles into cell-cell contacts. Interacts (via the cytoplasmic domain) with MARVELD2 (via C-terminal cytoplasmic domain); the interaction is required to recruit MARVELD2 to tricellular contacts. Interacts with OCLN. In terms of processing, phosphorylation at Ser-308 by MAPK8/JNK1 and MAPK9/JNK2 may be required for exclusive localization at tricellular tight junstions. Post-translationally, polyubiquitinated at Lys-583 via 'Lys-63'-linked ubiquitin chains; deubiquitinated by USP53. As to expression, expressed in epithelial tissues (at protein level). Specifically expressed in liver and to a lower extent in kidney (at protein level). Also detected in brain, testis, ovaries, adrenal gland, intestine, muscle, and lung. In colon, only expressed in the lower portion of crypts. Expressed in the liver. Expressed in liver, stomach, small intestine and colon. Also detected in other epithelial tissues.

It is found in the cell membrane. It localises to the cell junction. The protein localises to the tight junction. Its function is as follows. Probable role in the clearance of triglyceride-rich lipoprotein from blood. Binds chylomicrons, LDL and VLDL in presence of free fatty acids and allows their subsequent uptake in the cells. Maintains epithelial barrier function by recruiting MARVELD2/tricellulin to tricellular tight junctions. The protein is Lipolysis-stimulated lipoprotein receptor of Mus musculus (Mouse).